Reading from the N-terminus, the 356-residue chain is Protein-L-isoaspartate O-methyltransferase domain-containing protein 1 (356 aa).

Residue Gly2 is the site of N-myristoyl glycine attachment. Ser64 is an active-site residue. AdoMet binding motif stretches follow at residues 85 to 94, 160 to 164, and 181 to 191; these read LNLGSGTGYL, YDRIY, and LKVGGILVMPI. Positions 240–250 are BC-box; sequence VRNLQDLARIY. Residues 299–331 form a disordered region; the sequence is PLDSEEDEKMEEDKEEEEKEPGEALKPEEPPQN. Acidic residues predominate over residues 301-318; that stretch reads DSEEDEKMEEDKEEEEKE. Over residues 319–331 the composition is skewed to basic and acidic residues; sequence PGEALKPEEPPQN. A CUL-box region spans residues 340-343; that stretch reads LPLP.

Belongs to the methyltransferase superfamily. L-isoaspartyl/D-aspartyl protein methyltransferase family. As to quaternary structure, component of the probable ECS(PCMTD1) E3 ubiquitin-protein ligase complex, at least composed of CUL5, ELOB, ELOC, RBX2 and PCMTD1. Interacts (via the BC-box) with ELOB and ELOC; the interaction is direct and stabilizes PCMTD1.

It is found in the cytoplasm. The protein localises to the membrane. Functionally, substrate recognition component of an ECS (Elongin BC-CUL5-SOCS-box protein) E3 ubiquitin ligase complex which mediates the ubiquitination and subsequent proteasomal degradation of target proteins. Specifically binds to the methyltransferase cofactor S-adenosylmethionine (AdoMet) via the N-terminal AdoMet binding motif, but does not display methyltransferase activity. May provide an alternate maintenance pathway for modified proteins by acting as a damage-specific E3 ubiquitin ligase adaptor protein. This chain is Protein-L-isoaspartate O-methyltransferase domain-containing protein 1 (PCMTD1), found in Bos taurus (Bovine).